A 663-amino-acid chain; its full sequence is Nucleolar complex-associated protein 3 (663 aa).

The interval 1-132 (MAKRNRSQFR…AKEDEPDTEE (132 aa)) is disordered. The span at 82–97 (GKVERKLHKAQEKPKD) shows a compositional bias: basic and acidic residues. A compositionally biased stretch (acidic residues) spans 98 to 130 (DDEEDEDSNDSSEDDEGPNEEQEAEAKEDEPDT). Residues 363–408 (KKDRVHLSKKQRKARKEMQQIEEEMRNAEQAVSAEERERNQSEILK) are a coiled coil. Ser-395 is subject to Phosphoserine.

It belongs to the CBF/MAK21 family. Forms a heterodimer with NOC2. This complex may be associated with pre-ribosomal particles. Also interacts with MCM2, MCM5 and ORC1.

The protein localises to the nucleus. It localises to the nucleolus. Required for synthesis of 60S ribosomal subunits and the transport of pre-ribosomes from the nucleoplasm to the cytoplasm. Also required for initiation of DNA replication. May function downstream of the origin recognition complex (ORC complex) in the loading of CDC6 and the minichromosome maintenance complex (MCM complex) onto chromatin during the G1 phase of the cell cycle. Essential for growth. The polypeptide is Nucleolar complex-associated protein 3 (NOC3) (Saccharomyces cerevisiae (strain ATCC 204508 / S288c) (Baker's yeast)).